Reading from the N-terminus, the 330-residue chain is Ig gamma-2A chain C region, A allele (330 aa).

Ig-like domains are found at residues P6–E98, P121–S220, and P229–S325. Intrachain disulfides connect C27-C82, C144-C204, and C250-C308. N-linked (GlcNAc...) asparagine glycosylation occurs at N180.

The protein is Ig gamma-2A chain C region, A allele (Ighg) of Mus musculus (Mouse).